Consider the following 1255-residue polypeptide: RNA-directed RNA polymerase (1255 aa).

The region spanning 548–756 (LIPLGLSPYA…QQRVSCGTFV (209 aa)) is the RdRp catalytic domain.

It localises to the virion. The catalysed reaction is RNA(n) + a ribonucleoside 5'-triphosphate = RNA(n+1) + diphosphate. Its function is as follows. RNA-directed RNA polymerase that is involved in transcription and genome replication. Following infection, it catalyzes the synthesis of fully conservative plus strands. After core assembly, which consists in recruitment of one capped plus-strand for each genomic segments and polymerase complexes, the polymerase switches mode and catalyzes the synthesis of complementary minus-strands. This is RNA-directed RNA polymerase from Oryza latifolia (Indian wild rice).